A 45-amino-acid polypeptide reads, in one-letter code: uncharacterized protein (45 aa).

This is an uncharacterized protein from Methanocaldococcus jannaschii (strain ATCC 43067 / DSM 2661 / JAL-1 / JCM 10045 / NBRC 100440) (Methanococcus jannaschii).